The sequence spans 174 residues: ATP-dependent protease subunit HslV (174 aa).

The active site involves Thr-2. Residues Gly-157, Cys-160, and Thr-163 each contribute to the Na(+) site.

This sequence belongs to the peptidase T1B family. HslV subfamily. As to quaternary structure, a double ring-shaped homohexamer of HslV is capped on each side by a ring-shaped HslU homohexamer. The assembly of the HslU/HslV complex is dependent on binding of ATP.

The protein localises to the cytoplasm. The catalysed reaction is ATP-dependent cleavage of peptide bonds with broad specificity.. Its activity is regulated as follows. Allosterically activated by HslU binding. Protease subunit of a proteasome-like degradation complex believed to be a general protein degrading machinery. In Cellvibrio japonicus (strain Ueda107) (Pseudomonas fluorescens subsp. cellulosa), this protein is ATP-dependent protease subunit HslV.